Here is a 151-residue protein sequence, read N- to C-terminus: Large ribosomal subunit protein uL13 (151 aa).

The protein belongs to the universal ribosomal protein uL13 family. In terms of assembly, part of the 50S ribosomal subunit.

In terms of biological role, this protein is one of the early assembly proteins of the 50S ribosomal subunit, although it is not seen to bind rRNA by itself. It is important during the early stages of 50S assembly. This Nostoc sp. (strain PCC 7120 / SAG 25.82 / UTEX 2576) protein is Large ribosomal subunit protein uL13.